We begin with the raw amino-acid sequence, 268 residues long: Glutamate racemase (268 aa).

Substrate is bound by residues 14-15 (DS) and 46-47 (YG). Cysteine 78 (proton donor/acceptor) is an active-site residue. 79–80 (NT) contributes to the substrate binding site. Residue cysteine 192 is the Proton donor/acceptor of the active site. Position 193–194 (193–194 (TH)) interacts with substrate.

It belongs to the aspartate/glutamate racemases family.

It carries out the reaction L-glutamate = D-glutamate. It functions in the pathway cell wall biogenesis; peptidoglycan biosynthesis. Provides the (R)-glutamate required for cell wall biosynthesis. In Sphingopyxis alaskensis (strain DSM 13593 / LMG 18877 / RB2256) (Sphingomonas alaskensis), this protein is Glutamate racemase.